The chain runs to 369 residues: Small RNA 2'-O-methyltransferase (369 aa).

S-adenosyl-L-methionine is bound by residues S39, D57, and S93. 4 residues coordinate Mg(2+): E111, E114, H115, and H161.

Belongs to the methyltransferase superfamily. HEN1 family. It depends on Mg(2+) as a cofactor.

It is found in the cytoplasm. The enzyme catalyses small RNA 3'-end nucleotide + S-adenosyl-L-methionine = small RNA 3'-end 2'-O-methylnucleotide + S-adenosyl-L-homocysteine + H(+). Its function is as follows. Methyltransferase that adds a 2'-O-methyl group at the 3'-end of piRNAs, a class of 24 to 30 nucleotide RNAs that are generated by a Dicer-independent mechanism and are primarily derived from transposons and other repeated sequence elements. This probably protects the 3'-end of piRNAs from uridylation activity and subsequent degradation. Stabilization of piRNAs is essential for gametogenesis. The chain is Small RNA 2'-O-methyltransferase (henmt1) from Xenopus tropicalis (Western clawed frog).